Reading from the N-terminus, the 1295-residue chain is Phosphoribosylformylglycinamidine synthase (1295 aa).

The disordered stretch occupies residues 305 to 327; the sequence is WPGAATGSGGEIRDEGATGRGAK. Residues 307–318 and Ala678 contribute to the ATP site; that span reads GAATGSGGEIRD. The Mg(2+) site is built by Glu718, Asn722, and Asp884. ATP is bound at residue Ser886. The region spanning 1042–1295 is the Glutamine amidotransferase type-1 domain; sequence VAVLREQGVN…IFRNARKQLG (254 aa). Catalysis depends on Cys1135, which acts as the Nucleophile. Active-site residues include His1260 and Glu1262.

It in the N-terminal section; belongs to the FGAMS family. Monomer.

The protein localises to the cytoplasm. The catalysed reaction is N(2)-formyl-N(1)-(5-phospho-beta-D-ribosyl)glycinamide + L-glutamine + ATP + H2O = 2-formamido-N(1)-(5-O-phospho-beta-D-ribosyl)acetamidine + L-glutamate + ADP + phosphate + H(+). It participates in purine metabolism; IMP biosynthesis via de novo pathway; 5-amino-1-(5-phospho-D-ribosyl)imidazole from N(2)-formyl-N(1)-(5-phospho-D-ribosyl)glycinamide: step 1/2. Functionally, phosphoribosylformylglycinamidine synthase involved in the purines biosynthetic pathway. Catalyzes the ATP-dependent conversion of formylglycinamide ribonucleotide (FGAR) and glutamine to yield formylglycinamidine ribonucleotide (FGAM) and glutamate. This is Phosphoribosylformylglycinamidine synthase from Escherichia coli (strain UTI89 / UPEC).